Consider the following 333-residue polypeptide: Biotin synthase (333 aa).

Positions 47 to 276 (YYGKKVKLNM…TKEIRISGGR (230 aa)) constitute a Radical SAM core domain. 3 residues coordinate [4Fe-4S] cluster: cysteine 65, cysteine 69, and cysteine 72. The [2Fe-2S] cluster site is built by cysteine 109, cysteine 141, cysteine 201, and arginine 271.

Belongs to the radical SAM superfamily. Biotin synthase family. As to quaternary structure, homodimer. The cofactor is [4Fe-4S] cluster. [2Fe-2S] cluster serves as cofactor.

The catalysed reaction is (4R,5S)-dethiobiotin + (sulfur carrier)-SH + 2 reduced [2Fe-2S]-[ferredoxin] + 2 S-adenosyl-L-methionine = (sulfur carrier)-H + biotin + 2 5'-deoxyadenosine + 2 L-methionine + 2 oxidized [2Fe-2S]-[ferredoxin]. It functions in the pathway cofactor biosynthesis; biotin biosynthesis; biotin from 7,8-diaminononanoate: step 2/2. Its function is as follows. Catalyzes the conversion of dethiobiotin (DTB) to biotin by the insertion of a sulfur atom into dethiobiotin via a radical-based mechanism. This chain is Biotin synthase, found in Bacillus licheniformis (strain ATCC 14580 / DSM 13 / JCM 2505 / CCUG 7422 / NBRC 12200 / NCIMB 9375 / NCTC 10341 / NRRL NRS-1264 / Gibson 46).